An 848-amino-acid chain; its full sequence is Alanine--tRNA ligase (848 aa).

Residues His-553, His-557, Cys-654, and His-658 each coordinate Zn(2+).

The protein belongs to the class-II aminoacyl-tRNA synthetase family. The cofactor is Zn(2+).

The protein localises to the cytoplasm. The enzyme catalyses tRNA(Ala) + L-alanine + ATP = L-alanyl-tRNA(Ala) + AMP + diphosphate. Catalyzes the attachment of alanine to tRNA(Ala) in a two-step reaction: alanine is first activated by ATP to form Ala-AMP and then transferred to the acceptor end of tRNA(Ala). Also edits incorrectly charged Ser-tRNA(Ala) and Gly-tRNA(Ala) via its editing domain. The sequence is that of Alanine--tRNA ligase from Neorickettsia sennetsu (strain ATCC VR-367 / Miyayama) (Ehrlichia sennetsu).